We begin with the raw amino-acid sequence, 262 residues long: Ribosome-recycling factor, mitochondrial (262 aa).

The transit peptide at 1–55 directs the protein to the mitochondrion; sequence MASGIRCFRLLHPAFRSYHAALTRPVSEVSMKTVSGRQHGHRQYSAYPAVPVRHF.

Belongs to the RRF family.

The protein resides in the mitochondrion. Responsible for the disassembly of ribosomes from messenger RNA at the termination of mitochondrial protein biosynthesis. Acts in collaboration with GFM2. Promotes mitochondrial ribosome recycling by dissolution of intersubunit contacts. This is Ribosome-recycling factor, mitochondrial (Mrrf) from Mus musculus (Mouse).